A 338-amino-acid chain; its full sequence is Holliday junction branch migration complex subunit RuvB (338 aa).

The large ATPase domain (RuvB-L) stretch occupies residues 4 to 184 (ADRLMSAAAV…FGIVQRLEFY (181 aa)). Residues I23, R24, G65, K68, T69, T70, 131 to 133 (EDY), R174, Y184, and R221 each bind ATP. T69 contributes to the Mg(2+) binding site. The tract at residues 185-255 (QTGDLQHIVS…VAVSALNMLN (71 aa)) is small ATPAse domain (RuvB-S). Positions 258–338 (TEGFDFMDRK…GLEEHGGDPE (81 aa)) are head domain (RuvB-H). DNA is bound by residues R294, R313, and R318.

This sequence belongs to the RuvB family. In terms of assembly, homohexamer. Forms an RuvA(8)-RuvB(12)-Holliday junction (HJ) complex. HJ DNA is sandwiched between 2 RuvA tetramers; dsDNA enters through RuvA and exits via RuvB. An RuvB hexamer assembles on each DNA strand where it exits the tetramer. Each RuvB hexamer is contacted by two RuvA subunits (via domain III) on 2 adjacent RuvB subunits; this complex drives branch migration. In the full resolvosome a probable DNA-RuvA(4)-RuvB(12)-RuvC(2) complex forms which resolves the HJ.

The protein localises to the cytoplasm. It catalyses the reaction ATP + H2O = ADP + phosphate + H(+). The RuvA-RuvB-RuvC complex processes Holliday junction (HJ) DNA during genetic recombination and DNA repair, while the RuvA-RuvB complex plays an important role in the rescue of blocked DNA replication forks via replication fork reversal (RFR). RuvA specifically binds to HJ cruciform DNA, conferring on it an open structure. The RuvB hexamer acts as an ATP-dependent pump, pulling dsDNA into and through the RuvAB complex. RuvB forms 2 homohexamers on either side of HJ DNA bound by 1 or 2 RuvA tetramers; 4 subunits per hexamer contact DNA at a time. Coordinated motions by a converter formed by DNA-disengaged RuvB subunits stimulates ATP hydrolysis and nucleotide exchange. Immobilization of the converter enables RuvB to convert the ATP-contained energy into a lever motion, pulling 2 nucleotides of DNA out of the RuvA tetramer per ATP hydrolyzed, thus driving DNA branch migration. The RuvB motors rotate together with the DNA substrate, which together with the progressing nucleotide cycle form the mechanistic basis for DNA recombination by continuous HJ branch migration. Branch migration allows RuvC to scan DNA until it finds its consensus sequence, where it cleaves and resolves cruciform DNA. This is Holliday junction branch migration complex subunit RuvB from Sodalis glossinidius (strain morsitans).